The sequence spans 1188 residues: Zinc finger SWIM domain-containing protein 5 (1188 aa).

Positions 1 to 10 are enriched in basic and acidic residues; the sequence is MAEGGEREEL. Disordered regions lie at residues 1-46 and 123-171; these read MAEG…GAGG and AGAA…TGTA. 2 stretches are compositionally biased toward low complexity: residues 126–136 and 146–155; these read AAGAAGASPVE and AAPAGSAPGA. The span at 156–171 shows a compositional bias: gly residues; sequence AGAGSSPGLGAGTGTA. The segment at 222-259 adopts an SWIM-type zinc-finger fold; sequence YKVAISFDRCKITSVSCGCGNKDIFYCAHVVALSLYRI.

In Mus musculus (Mouse), this protein is Zinc finger SWIM domain-containing protein 5 (Zswim5).